A 593-amino-acid chain; its full sequence is Myc box-dependent-interacting protein 1 (593 aa).

Ala-2 carries the N-acetylalanine modification. The interaction with BIN2 stretch occupies residues 2–122 (AEMGSKGVTA…DYHQKLVDQA (121 aa)). Coiled coils occupy residues 15-42 (ASNV…TKDE) and 193-267 (HLVA…NDVL). The BAR domain occupies 29–276 (VLQKLGKADE…LVGLEKQHGS (248 aa)). Disordered regions lie at residues 280–354 (TVKA…KEVK) and 400–488 (PVTS…AASS). Phosphoserine occurs at positions 296, 298, and 303. Residues Thr-307 and Thr-323 each carry the phosphothreonine modification. Ser-331 is modified (phosphoserine). The interval 378 to 421 (FEAPGPFSEQASLLDLDFDPLPPVTSPVKAPTPSGQSIPWDLWE) is clathrin-binding. One can recognise an SH3 domain in the interval 520–593 (GFMFKVQAQH…FPENFTERVP (74 aa)).

Heterodimer with AMPH. Binds SH3GLB1. Interacts (via SH3 domain) with DNM1. Interacts with SYNJ1. Interacts (via SH3 domain) with DNM2. Isoform IIA interacts with CLTC. Isoform IIB does not interact with CLTC. Isoform IIC1 does not interact with CLTC. Isoform IIC2 does not interact with CLTC. Interacts with AP2A2. Interacts with AP2B1. Interacts with MYC (via N-terminal transactivation domain); the interaction requires the integrity of the conserved MYC box regions 1 and 2. Interacts with BIN2. Interacts with SNX4. Interacts (via BAR domain) with BACE1. Binds (via BAR domain) F-actin. In terms of assembly, (Microbial infection) Interacts (SH3 domain) with HCV NS5A. In terms of processing, phosphorylated by protein kinase C. In terms of tissue distribution, ubiquitous. Highest expression in the brain and muscle. Expressed in oligodendrocytes. Isoform IIA is expressed only in the brain, where it is detected in the gray matter, but not in the white matter. Isoform BIN1 is widely expressed with highest expression in skeletal muscle.

It localises to the nucleus. The protein localises to the cytoplasm. It is found in the endosome. The protein resides in the cell membrane. Its subcellular location is the sarcolemma. It localises to the T-tubule. In terms of biological role, is a key player in the control of plasma membrane curvature, membrane shaping and membrane remodeling. Required in muscle cells for the formation of T-tubules, tubular invaginations of the plasma membrane that function in depolarization-contraction coupling. Is a negative regulator of endocytosis. Is also involved in the regulation of intracellular vesicles sorting, modulation of BACE1 trafficking and the control of amyloid-beta production. In neuronal circuits, endocytosis regulation may influence the internalization of PHF-tau aggregates. May be involved in the regulation of MYC activity and the control cell proliferation. Has actin bundling activity and stabilizes actin filaments against depolymerization in vitro. The protein is Myc box-dependent-interacting protein 1 (BIN1) of Homo sapiens (Human).